The chain runs to 983 residues: Bifunctional glutamine synthetase adenylyltransferase/adenylyl-removing enzyme (983 aa).

Residues 1–468 form an adenylyl removase region; that stretch reads MTVENAKALF…KQYAALFEQA (468 aa). The interval 473–983 is adenylyl transferase; sequence AASGNLVFTG…FDKLVGHGAD (511 aa).

This sequence belongs to the GlnE family. It depends on Mg(2+) as a cofactor.

It catalyses the reaction [glutamine synthetase]-O(4)-(5'-adenylyl)-L-tyrosine + phosphate = [glutamine synthetase]-L-tyrosine + ADP. The catalysed reaction is [glutamine synthetase]-L-tyrosine + ATP = [glutamine synthetase]-O(4)-(5'-adenylyl)-L-tyrosine + diphosphate. Involved in the regulation of glutamine synthetase GlnA, a key enzyme in the process to assimilate ammonia. When cellular nitrogen levels are high, the C-terminal adenylyl transferase (AT) inactivates GlnA by covalent transfer of an adenylyl group from ATP to specific tyrosine residue of GlnA, thus reducing its activity. Conversely, when nitrogen levels are low, the N-terminal adenylyl removase (AR) activates GlnA by removing the adenylyl group by phosphorolysis, increasing its activity. The regulatory region of GlnE binds the signal transduction protein PII (GlnB) which indicates the nitrogen status of the cell. The chain is Bifunctional glutamine synthetase adenylyltransferase/adenylyl-removing enzyme from Brucella melitensis biotype 1 (strain ATCC 23456 / CCUG 17765 / NCTC 10094 / 16M).